Reading from the N-terminus, the 647-residue chain is Threonine--tRNA ligase (647 aa).

In terms of domain architecture, TGS spans 1–61 (MINITFPDGA…TEDGSIEIVT (61 aa)). A catalytic region spans residues 242 to 540 (DHRKLGKELD…LIENYKGAFP (299 aa)). The Zn(2+) site is built by cysteine 336, histidine 387, and histidine 517.

Belongs to the class-II aminoacyl-tRNA synthetase family. As to quaternary structure, homodimer. It depends on Zn(2+) as a cofactor.

The protein localises to the cytoplasm. The catalysed reaction is tRNA(Thr) + L-threonine + ATP = L-threonyl-tRNA(Thr) + AMP + diphosphate + H(+). In terms of biological role, catalyzes the attachment of threonine to tRNA(Thr) in a two-step reaction: L-threonine is first activated by ATP to form Thr-AMP and then transferred to the acceptor end of tRNA(Thr). Also edits incorrectly charged L-seryl-tRNA(Thr). In Streptococcus pneumoniae serotype 2 (strain D39 / NCTC 7466), this protein is Threonine--tRNA ligase.